Reading from the N-terminus, the 381-residue chain is Homoserine O-succinyltransferase (381 aa).

In terms of domain architecture, AB hydrolase-1 spans 45-360 (NAVLVCHALN…PHGHDAFLLD (316 aa)). Ser-151 acts as the Nucleophile in catalysis. Arg-221 serves as a coordination point for substrate. Active-site residues include Asp-321 and His-354. Asp-355 contacts substrate.

It belongs to the AB hydrolase superfamily. MetX family. As to quaternary structure, homodimer.

Its subcellular location is the cytoplasm. It catalyses the reaction L-homoserine + succinyl-CoA = O-succinyl-L-homoserine + CoA. It functions in the pathway amino-acid biosynthesis; L-methionine biosynthesis via de novo pathway; O-succinyl-L-homoserine from L-homoserine: step 1/1. Transfers a succinyl group from succinyl-CoA to L-homoserine, forming succinyl-L-homoserine. This Paraburkholderia phymatum (strain DSM 17167 / CIP 108236 / LMG 21445 / STM815) (Burkholderia phymatum) protein is Homoserine O-succinyltransferase.